The sequence spans 229 residues: MTFYQLSDAEGADNYYNPLLLWWYDFWVHWVSALFAWKCSSKNILLPFFLSNIGSRHCDVGVGTGYYLSAVRKRQPSWPQDKLTLVDFHIRCLRKAANRVGIADRTECVLANILEPIPIQPERQFDSISLMYVLHCLPGASKDKGRVFANLKPLLKDSGTLFGSTLLCRGVRQNWFNWLLQRIYNAVDMFQNRADFPDDFVRALEEEFEEVESVIIGTVLMFKARKPRR.

The protein belongs to the methyltransferase superfamily.

Its pathway is mycotoxin biosynthesis. Methyltransferase; part of the gene cluster that mediates the biosynthesis of citreoviridin, an inhibitor of the of F1-ATPase beta-subunit. The HR-PKS ctvA accepts acetyl-CoA as the starter unit and catalyzes eight iterations of malonyl-CoA extension and four iterations of SAM-dependent methylation at C4, C12, C14, and C16. The KR and DH domains selectively act on the first six iterations to generate the hexaene chain. In the last three iterations, the KR and DH domains terminate their functions to yield a beta,delta-diketo ester moiety, which then undergoes intramolecular cyclization to yield an alpha-pyrone intermediate. Subsequently, ctvB methylates the alpha-pyrone hydroxyl group to generate citreomontanin. In order to form the tetrahydrofuran ring with the correct stereochemistry, the terminal alkenes of citreomontanin need to undergo isomerization to yield a (17Z)-hexaene, a step that could be catalyzed by ctvC. The (17Z)-hexaene then undergoes bisepoxidation by ctvC to form a (17R,16R,15S,14R)-bisepoxide moiety. Lastly, ctvD acts as a regioselective hydrolase to form the tetrahydrofuran ring with the substituents in the correct absolute configuration, completing the biosynthesis of citreoviridin. This chain is Methyltransferase ctvB, found in Aspergillus terreus (strain NIH 2624 / FGSC A1156).